A 484-amino-acid polypeptide reads, in one-letter code: Neuronal acetylcholine receptor subunit alpha-9 (484 aa).

The first 27 residues, 1 to 27 (MKRNNLSSFYVSLWLLFTATMLQAVES), serve as a signal peptide directing secretion. Topologically, residues 28-240 (AKGKYAQMLF…FTLILKRKSS (213 aa)) are extracellular. Residue Asn-59 is glycosylated (N-linked (GlcNAc...) asparagine). An intrachain disulfide couples Cys-157 to Cys-171. The N-linked (GlcNAc...) asparagine glycan is linked to Asn-172. Ser-193 and Asp-195 together coordinate Na(+). A disulfide bridge connects residues Cys-221 and Cys-222. A run of 3 helical transmembrane segments spans residues 241–261 (FYIFNLLLPCILISFLAPLGF), 271–291 (VSLGVTVLLALTVFQLMVAEI), and 305–325 (YIATMTMITASTALTIIIMNV). Topologically, residues 326 to 462 (HHCGSEAKPV…WKKVAKVMDR (137 aa)) are cytoplasmic. Residues 364-395 (RREKEQEHRLEGGDMCRGGDGKSHLSSRNDDS) form a disordered region. Residues 463–483 (FFMWIFFIMVFFMSVLIIGKA) traverse the membrane as a helical segment.

This sequence belongs to the ligand-gated ion channel (TC 1.A.9) family. Acetylcholine receptor (TC 1.A.9.1) subfamily. Alpha-9/CHRNA9 sub-subfamily. In terms of assembly, forms homo- or heteropentameric channels in conjunction with CHRNA10. The native outer hair cell receptor is composed of CHRNA9:CHRNA10 heterooligomers. Found in the stoichiometric form (CHRNA9)2:(CHRNA10)3. As to expression, expressed in hair cells of the cochlea (at protein level). Expressed in hair cells of the cochlea.

Its subcellular location is the synaptic cell membrane. It is found in the cell membrane. The enzyme catalyses Ca(2+)(in) = Ca(2+)(out). The catalysed reaction is K(+)(in) = K(+)(out). It carries out the reaction Na(+)(in) = Na(+)(out). It catalyses the reaction Mg(2+)(in) = Mg(2+)(out). Its activity is regulated as follows. Activated by a myriad of ligands such as acetylcholine. AChR activity is inhibited by the antagonist alpha-conotoxins RgIA and GeXXA, small disulfide-constrained peptides from cone snails. Component of neuronal acetylcholine receptors (nAChRs) that function as pentameric, ligand-gated cation channels with high calcium permeability among other activities. nAChRs are excitatory neurotrasnmitter receptors formed by a collection of nAChR subunits known to mediate synaptic transmission in the nervous system and the neuromuscular junction. Each nAchR subunit confers differential attributes to channel properties, including activation, deactivation and desensitization kinetics, pH sensitivity, cation permeability, and binding to allosteric modulators. Forms either homopentamers or heteropentamers with CHRNA10. Expressed in the inner ear, in sympathetic neurons and in other non-neuronal cells, such as skin keratinocytes and lymphocytes. The channel is permeable to a range of divalent cations including calcium, the influx of which may activate a potassium current which hyperpolarizes the cell membrane. The protein is Neuronal acetylcholine receptor subunit alpha-9 (CHRNA9) of Gallus gallus (Chicken).